The primary structure comprises 454 residues: Bifunctional protein GlmU (454 aa).

Residues 1–226 form a pyrophosphorylase region; the sequence is MALNVVILAA…AIEVEGANNR (226 aa). UDP-N-acetyl-alpha-D-glucosamine contacts are provided by residues 8–11, lysine 22, glutamine 73, 78–79, 100–102, glycine 137, glutamate 151, asparagine 166, and asparagine 224; these read LAAG, GT, and YGD. Residue aspartate 102 participates in Mg(2+) binding. Asparagine 224 serves as a coordination point for Mg(2+). Positions 227–247 are linker; sequence VQLAQLERAYQARAAEKLMLE. An N-acetyltransferase region spans residues 248 to 454; sequence GANLRDPARI…GWTRPVKQKK (207 aa). Residues arginine 330 and lysine 348 each contribute to the UDP-N-acetyl-alpha-D-glucosamine site. The active-site Proton acceptor is histidine 360. Tyrosine 363 and asparagine 374 together coordinate UDP-N-acetyl-alpha-D-glucosamine. Residues alanine 377, 383 to 384, serine 402, alanine 420, and arginine 437 contribute to the acetyl-CoA site; that span reads NY.

This sequence in the N-terminal section; belongs to the N-acetylglucosamine-1-phosphate uridyltransferase family. In the C-terminal section; belongs to the transferase hexapeptide repeat family. Homotrimer. Requires Mg(2+) as cofactor.

It is found in the cytoplasm. It carries out the reaction alpha-D-glucosamine 1-phosphate + acetyl-CoA = N-acetyl-alpha-D-glucosamine 1-phosphate + CoA + H(+). It catalyses the reaction N-acetyl-alpha-D-glucosamine 1-phosphate + UTP + H(+) = UDP-N-acetyl-alpha-D-glucosamine + diphosphate. Its pathway is nucleotide-sugar biosynthesis; UDP-N-acetyl-alpha-D-glucosamine biosynthesis; N-acetyl-alpha-D-glucosamine 1-phosphate from alpha-D-glucosamine 6-phosphate (route II): step 2/2. The protein operates within nucleotide-sugar biosynthesis; UDP-N-acetyl-alpha-D-glucosamine biosynthesis; UDP-N-acetyl-alpha-D-glucosamine from N-acetyl-alpha-D-glucosamine 1-phosphate: step 1/1. It participates in bacterial outer membrane biogenesis; LPS lipid A biosynthesis. Functionally, catalyzes the last two sequential reactions in the de novo biosynthetic pathway for UDP-N-acetylglucosamine (UDP-GlcNAc). The C-terminal domain catalyzes the transfer of acetyl group from acetyl coenzyme A to glucosamine-1-phosphate (GlcN-1-P) to produce N-acetylglucosamine-1-phosphate (GlcNAc-1-P), which is converted into UDP-GlcNAc by the transfer of uridine 5-monophosphate (from uridine 5-triphosphate), a reaction catalyzed by the N-terminal domain. This chain is Bifunctional protein GlmU, found in Shewanella loihica (strain ATCC BAA-1088 / PV-4).